The primary structure comprises 254 residues: Peptide methionine sulfoxide reductase A5 (254 aa).

Residues 1 to 33 (MAISLKRNRFFIPYTNLVFFFFLCVSLLDKTVS) form the signal peptide.

The protein belongs to the MsrA Met sulfoxide reductase family.

The enzyme catalyses L-methionyl-[protein] + [thioredoxin]-disulfide + H2O = L-methionyl-(S)-S-oxide-[protein] + [thioredoxin]-dithiol. It carries out the reaction [thioredoxin]-disulfide + L-methionine + H2O = L-methionine (S)-S-oxide + [thioredoxin]-dithiol. Functionally, catalyzes the reduction of methionine sulfoxide (MetSO) to methionine in proteins. Plays a protective role against oxidative stress by restoring activity to proteins that have been inactivated by methionine oxidation. MSRA family specifically reduces the MetSO S-enantiomer. This is Peptide methionine sulfoxide reductase A5 (MSRA5) from Arabidopsis thaliana (Mouse-ear cress).